The sequence spans 220 residues: Pyridoxine/pyridoxamine 5'-phosphate oxidase (220 aa).

Residues 13–16 (RVEY) and lysine 77 contribute to the substrate site. Residues 72–77 (RTVLCK), 87–88 (FT), lysine 94, and glutamine 116 contribute to the FMN site. Substrate-binding residues include tyrosine 134, arginine 138, and serine 142. FMN contacts are provided by residues 151–152 (QS) and tryptophan 197. Position 203–205 (203–205 (RVH)) interacts with substrate. Arginine 207 contributes to the FMN binding site.

The protein belongs to the pyridoxamine 5'-phosphate oxidase family. As to quaternary structure, homodimer. The cofactor is FMN.

It catalyses the reaction pyridoxamine 5'-phosphate + O2 + H2O = pyridoxal 5'-phosphate + H2O2 + NH4(+). It carries out the reaction pyridoxine 5'-phosphate + O2 = pyridoxal 5'-phosphate + H2O2. The protein operates within cofactor metabolism; pyridoxal 5'-phosphate salvage; pyridoxal 5'-phosphate from pyridoxamine 5'-phosphate: step 1/1. Its pathway is cofactor metabolism; pyridoxal 5'-phosphate salvage; pyridoxal 5'-phosphate from pyridoxine 5'-phosphate: step 1/1. In terms of biological role, catalyzes the oxidation of either pyridoxine 5'-phosphate (PNP) or pyridoxamine 5'-phosphate (PMP) into pyridoxal 5'-phosphate (PLP). The chain is Pyridoxine/pyridoxamine 5'-phosphate oxidase from Mycobacterium sp. (strain KMS).